Here is a 574-residue protein sequence, read N- to C-terminus: Alpha-mannosidase I MNS5 (574 aa).

The Cytoplasmic portion of the chain corresponds to 1–9 (MSCPIHPRR). The chain crosses the membrane as a helical; Signal-anchor for type II membrane protein span at residues 10–26 (LFLCLLISLTFFVVDPS). Over 27-574 (SQHIEVKKKQ…VGYCGLWNPL (548 aa)) the chain is Lumenal. Asn89, Asn107, and Asn121 each carry an N-linked (GlcNAc...) asparagine glycan. The active-site Proton donor is the Glu134. N-linked (GlcNAc...) asparagine glycosylation occurs at Asn201. Asp274 is a catalytic residue. An N-linked (GlcNAc...) asparagine glycan is attached at Asn349. Glu367 serves as the catalytic Proton donor. Residue Glu388 is part of the active site. Thr471 lines the Ca(2+) pocket. Residue Asn494 is glycosylated (N-linked (GlcNAc...) asparagine).

Belongs to the glycosyl hydrolase 47 family. Requires Ca(2+) as cofactor.

It localises to the endoplasmic reticulum membrane. It participates in protein modification; protein glycosylation. In terms of biological role, can convert Man(9)GlcNAc(2) and Man(8)GlcNAc(2) into N-glycans with a terminal alpha-1,6-linked Man residue in the C-branch. Functions in the formation of unique N-glycan structures that are specifically recognized by components of the endoplasmic reticulum-associated degradation (ERAD) machinery, which leads to the degradation of misfolded glycoproteins. Most likely generates N-glycan signal on misfolded glycoproteins that is subsequently recognized by OS9. Required for ERAD of the heavily glycosylated and misfolded BRI1 variants BRI1-5 and BRI1-9. Does not seem to play role in N-glycan processing of correctly folded proteins destined for secretion. This is Alpha-mannosidase I MNS5 (MNS5) from Arabidopsis thaliana (Mouse-ear cress).